We begin with the raw amino-acid sequence, 412 residues long: DNA primase DnaG (412 aa).

Residues proline 165–threonine 243 form the Toprim domain. Mg(2+) is bound by residues glutamate 171, aspartate 216, and aspartate 218.

Belongs to the archaeal DnaG primase family. As to quaternary structure, forms a ternary complex with MCM helicase and DNA. Component of the archaeal exosome complex. It depends on Mg(2+) as a cofactor.

It catalyses the reaction ssDNA + n NTP = ssDNA/pppN(pN)n-1 hybrid + (n-1) diphosphate.. Its function is as follows. RNA polymerase that catalyzes the synthesis of short RNA molecules used as primers for DNA polymerase during DNA replication. Also part of the exosome, which is a complex involved in RNA degradation. Acts as a poly(A)-binding protein that enhances the interaction between heteromeric, adenine-rich transcripts and the exosome. The polypeptide is DNA primase DnaG (Sulfolobus acidocaldarius (strain ATCC 33909 / DSM 639 / JCM 8929 / NBRC 15157 / NCIMB 11770)).